The sequence spans 502 residues: NAD(P)H-quinone oxidoreductase chain 4, chloroplastic (502 aa).

The next 14 helical transmembrane spans lie at 4–24 (FPWLTILVVLPIFAGSLIFFL), 37–57 (ISICLLEFLLMTYAFCYHFQL), 87–107 (LGSILLTGFITTLATLAAWPV), 113–130 (LFYFLMLAMYSGQIGLFS), 134–154 (LLLFFIMWELELIPVYLLLSM), 167–187 (FILYTAGGSIFFLIGVLGMGL), 213–233 (ILLYFGFLIAYAVKLPIIPLH), 244–264 (HYSTCMLLAGILLKMGAYGLI), 274–294 (AHYLFSPWLVIIGAIQIIYAA), 315–335 (MGFIIIGIGSITNIGLNGAIL), 336–356 (QILSHGFIGATLFFLAGTASD), 388–408 (LALPGMSGFVAELVVFFGLIT), 419–439 (LITFVMAIGMILTPIYLLSML), and 464–484 (LFILICIFLPVIGIGIYPDFV).

The protein belongs to the complex I subunit 4 family.

The protein localises to the plastid. The protein resides in the chloroplast thylakoid membrane. The enzyme catalyses a plastoquinone + NADH + (n+1) H(+)(in) = a plastoquinol + NAD(+) + n H(+)(out). It catalyses the reaction a plastoquinone + NADPH + (n+1) H(+)(in) = a plastoquinol + NADP(+) + n H(+)(out). The polypeptide is NAD(P)H-quinone oxidoreductase chain 4, chloroplastic (Lolium perenne (Perennial ryegrass)).